The sequence spans 370 residues: Sphingolipid delta(4)-desaturase (370 aa).

A run of 3 helical transmembrane segments spans residues Val68–Phe88, Phe92–His112, and Leu128–Tyr148. The Histidine box-1 motif lies at His112–His116. The Histidine box-2 motif lies at His149–His153. A run of 3 helical transmembrane segments spans residues Phe173–Leu193, Phe197–Phe217, and Val220–Ala240. The Histidine box-3 motif lies at His299–His303.

It belongs to the fatty acid desaturase type 1 family. DEGS subfamily.

It is found in the membrane. It carries out the reaction an N-acylsphinganine + 2 Fe(II)-[cytochrome b5] + O2 + 2 H(+) = an N-acylsphing-4-enine + 2 Fe(III)-[cytochrome b5] + 2 H2O. The protein operates within lipid metabolism; sphingolipid metabolism. Delta(4)-fatty-acid desaturase which introduces a double bond at the 4-position in the long-chain base (LCB) of ceramides. Required for the formation of the monounsaturated sphingoid base (E)-sphing-4-enine during glucosylceramide (GluCer) biosynthesis. The sequence is that of Sphingolipid delta(4)-desaturase from Candida albicans (strain SC5314 / ATCC MYA-2876) (Yeast).